Reading from the N-terminus, the 206-residue chain is Ribosomal RNA large subunit methyltransferase E (206 aa).

The S-adenosyl-L-methionine site is built by glycine 61, tryptophan 63, aspartate 81, aspartate 97, and aspartate 122. Catalysis depends on lysine 162, which acts as the Proton acceptor.

The protein belongs to the class I-like SAM-binding methyltransferase superfamily. RNA methyltransferase RlmE family.

It is found in the cytoplasm. The catalysed reaction is uridine(2552) in 23S rRNA + S-adenosyl-L-methionine = 2'-O-methyluridine(2552) in 23S rRNA + S-adenosyl-L-homocysteine + H(+). In terms of biological role, specifically methylates the uridine in position 2552 of 23S rRNA at the 2'-O position of the ribose in the fully assembled 50S ribosomal subunit. The sequence is that of Ribosomal RNA large subunit methyltransferase E from Neisseria meningitidis serogroup C / serotype 2a (strain ATCC 700532 / DSM 15464 / FAM18).